The chain runs to 1282 residues: Cytokine receptor (1282 aa).

The N-terminal stretch at 1 to 23 (MVAQEQLVLLLMLLAGCRGGANA) is a signal peptide. The Extracellular segment spans residues 24–889 (ILDPGWVIPS…CTPDTHSVKA (866 aa)). N-linked (GlcNAc...) asparagine glycosylation is found at Asn44, Asn86, Asn87, and Asn114. Cys47 and Cys106 are joined by a disulfide. Fibronectin type-III domains lie at 124 to 220 (PLLV…NHFE), 227 to 327 (PGQN…TAPA), 329 to 431 (PRRP…SNRD), 436 to 535 (EPRN…KKDD), 537 to 631 (AKME…TGEA), 635 to 735 (QPRE…TAIG), and 736 to 836 (VPSP…LMST). Cys132 and Cys142 are disulfide-bonded. 2 N-linked (GlcNAc...) asparagine glycosylation sites follow: Asn143 and Asn156. Cysteines 173 and 183 form a disulfide. Residues Asn184, Asn230, Asn235, Asn278, Asn298, Asn310, Asn376, Asn448, and Asn466 are each glycosylated (N-linked (GlcNAc...) asparagine). The cysteines at positions 472 and 482 are disulfide-linked. Asn568, Asn581, Asn626, Asn676, Asn703, Asn777, Asn790, and Asn862 each carry an N-linked (GlcNAc...) asparagine glycan. Residues 890 to 910 (MYQTIEVTVAILVLGVIFYLV) traverse the membrane as a helical segment. Topologically, residues 911-1282 (YKKYRKMSDI…NAMAHNRHVL (372 aa)) are cytoplasmic. Position 976 is a phosphoserine (Ser976). Disordered stretches follow at residues 989 to 1092 (TASS…HTFS) and 1238 to 1258 (TVGS…QHSR). 2 stretches are compositionally biased toward basic and acidic residues: residues 999–1009 (VDRDGYDDNHE) and 1033–1064 (NDRE…DREQ).

The protein belongs to the type I cytokine receptor family. In terms of assembly, interacts with wdp; the interaction promotes internalization of dome and its subsequent lysosomal degradation; thereby reducing JAK/STAT signaling. In terms of processing, undergoes lysosomal degradation. As to expression, in stage 11 embryos, tracheal pits show highest expression, at stage 14 high expression is detected in the posterior spiracles, gut and head.

It localises to the apicolateral cell membrane. Its function is as follows. Critical for epithelial morphogenesis during oogenesis; border cell migration. Required in the germarium for the polarization of follicle cells during encapsulation of germline cells. Required for embryonic segmentation and trachea specification. Essential receptor molecule for upd and JAK/STAT signaling during oogenesis. The sequence is that of Cytokine receptor (dome) from Drosophila melanogaster (Fruit fly).